The primary structure comprises 536 residues: Putative ATP-dependent RNA helicase L364 (536 aa).

In terms of domain architecture, Helicase ATP-binding spans Ile-47–Pro-214. ATP is bound at residue Ser-60 to Thr-67. Residues Asp-160–His-163 carry the DEAH box motif. Residues Leu-288 to Lys-334 adopt a coiled-coil conformation. One can recognise a Helicase C-terminal domain in the interval Phe-338–Glu-486. Residues Val-502–Val-536 are disordered.

The protein belongs to the DEAD box helicase family. DEAH subfamily.

The enzyme catalyses ATP + H2O = ADP + phosphate + H(+). This Acanthamoeba polyphaga (Amoeba) protein is Putative ATP-dependent RNA helicase L364.